We begin with the raw amino-acid sequence, 475 residues long: Glutamyl-tRNA(Gln) amidotransferase subunit A (475 aa).

Catalysis depends on charge relay system residues lysine 76 and serine 151. The active-site Acyl-ester intermediate is serine 175.

This sequence belongs to the amidase family. GatA subfamily. In terms of assembly, heterotrimer of A, B and C subunits.

It carries out the reaction L-glutamyl-tRNA(Gln) + L-glutamine + ATP + H2O = L-glutaminyl-tRNA(Gln) + L-glutamate + ADP + phosphate + H(+). Allows the formation of correctly charged Gln-tRNA(Gln) through the transamidation of misacylated Glu-tRNA(Gln) in organisms which lack glutaminyl-tRNA synthetase. The reaction takes place in the presence of glutamine and ATP through an activated gamma-phospho-Glu-tRNA(Gln). This chain is Glutamyl-tRNA(Gln) amidotransferase subunit A, found in Pelodictyon phaeoclathratiforme (strain DSM 5477 / BU-1).